The chain runs to 708 residues: RUN and FYVE domain-containing protein 1 (708 aa).

The segment covering 1–17 (MADREGGCAAGRGRELE) has biased composition (basic and acidic residues). The interval 1–57 (MADREGGCAAGRGRELEPELEPGPGPGSALEPGEEFEIVDRSQLPGPGDLRSATRPR) is disordered. One can recognise an RUN domain in the interval 139-271 (DADHAPLQQF…LDANLCLKGE (133 aa)). The stretch at 321–374 (TVGDLQTKIDGLEKTNSKLQEELSAATDRICSLQEEQQQLREQNELIRERSEKS) forms a coiled coil. 2 positions are modified to phosphotyrosine: tyrosine 389 and tyrosine 400. A coiled-coil region spans residues 405–617 (KQLKEEKKVR…QALQEMGLHL (213 aa)). Residues 493–522 (QVMSSMKQMEERLQHSERARQGAEERSHKL) are disordered. Basic and acidic residues predominate over residues 500–522 (QMEERLQHSERARQGAEERSHKL). The interval 615 to 625 (LHLSQSKLKME) is interaction with RAB4. Phosphoserine is present on serine 620. An FYVE-type zinc finger spans residues 642-700 (DDEATHCRQCEKEFSISRRKHHCRNCGHIFCNTCSSNELALPSYPKPVRVCDSCHTLLL). 8 residues coordinate Zn(2+): cysteine 648, cysteine 651, cysteine 664, cysteine 667, cysteine 672, cysteine 675, cysteine 692, and cysteine 695.

Self-assembles through coiled coil domains to drive ELVA (endo-lysosomal vesicular assembly) formation. Interacts with BMX. May interact with SSB. Interacts with RAB4 and RAB5 that have been activated by GTP-binding. Interacts WITH RAB14 and RAB4B (GTP-bound form); the interactions allow endosomal tethering and fusion. Interacts with ARL8B (GTP-bound form); the interaction is required for RUFY1 endosomal location and promotes interaction with RAB14. Post-translationally, phosphorylation on Tyr-389 and/or Tyr-400 is required for interaction with BMX and endosomal targeting. In terms of tissue distribution, broadly expressed, with highest levels in lung, testis, kidney and brain.

It localises to the early endosome membrane. Functionally, activating adapter involved in cargo sorting from early/recycling endosomes. Regulates retrieval of proteins from endosomes to the trans-Golgi network through interaction with the dynein-dynactin complex. Dual effector of RAB4B and RAB14, mediates a cooperative interaction allowing endosomal tethering and fusion. Binds phospholipid vesicles containing phosphatidylinositol 3-phosphate and participates in early endosomal trafficking. In oocytes, self-assembles to form a protein matrix which hold together endolysosomes, autophagosomes and proteasomes and generate non-membrane-bound compartments called endo-lysosomal vesicular assemblies (ELVAs). In immature oocytes, ELVAs sequester ubiquitinated protein aggregates and degrade them upon oocyte maturation. This is RUN and FYVE domain-containing protein 1 from Homo sapiens (Human).